The chain runs to 1579 residues: DNA-directed RNA polymerase subunit beta' (1579 aa).

Positions 65, 67, 80, and 83 each coordinate Zn(2+). Positions 601, 603, and 605 each coordinate Mg(2+). Zn(2+) contacts are provided by cysteine 938, cysteine 1012, cysteine 1019, and cysteine 1022.

The protein belongs to the RNA polymerase beta' chain family. The RNAP catalytic core consists of 2 alpha, 1 beta, 1 beta' and 1 omega subunit. When a sigma factor is associated with the core the holoenzyme is formed, which can initiate transcription. It depends on Mg(2+) as a cofactor. Zn(2+) serves as cofactor.

It catalyses the reaction RNA(n) + a ribonucleoside 5'-triphosphate = RNA(n+1) + diphosphate. Functionally, DNA-dependent RNA polymerase catalyzes the transcription of DNA into RNA using the four ribonucleoside triphosphates as substrates. This is DNA-directed RNA polymerase subunit beta' from Sulfurihydrogenibium sp. (strain YO3AOP1).